Reading from the N-terminus, the 233-residue chain is uncharacterized protein (233 aa).

Residues L21–I41 traverse the membrane as a helical segment. Residues P44 to S163 are disordered. Composition is skewed to basic and acidic residues over residues D48–Q57, K66–D108, and D135–D144.

The protein localises to the cell membrane. This is an uncharacterized protein from Bacillus subtilis (strain 168).